The chain runs to 200 residues: Putative AgrB-like protein (200 aa).

5 consecutive transmembrane segments (helical) span residues 49–69, 88–108, 114–134, 148–168, and 171–191; these read LIIT…LVFM, LLCT…IQFT, LFRF…SPAV, ALKH…FLVS, and LGTI…PLKG.

This sequence belongs to the AgrB family.

The protein resides in the cell membrane. In terms of biological role, may be involved in the proteolytic processing of a quorum sensing system signal molecule precursor. This is Putative AgrB-like protein from Lactiplantibacillus plantarum (strain ATCC BAA-793 / NCIMB 8826 / WCFS1) (Lactobacillus plantarum).